A 328-amino-acid polypeptide reads, in one-letter code: DNA-directed RNA polymerase subunit alpha (328 aa).

The interval 1–234 is alpha N-terminal domain (alpha-NTD); sequence MQTAVNEFLT…QQLAVFVDLE (234 aa). The interval 248–328 is alpha C-terminal domain (alpha-CTD); it reads IDPILLRPVD…NWPPASLKND (81 aa).

The protein belongs to the RNA polymerase alpha chain family. As to quaternary structure, homodimer. The RNAP catalytic core consists of 2 alpha, 1 beta, 1 beta' and 1 omega subunit. When a sigma factor is associated with the core the holoenzyme is formed, which can initiate transcription.

It catalyses the reaction RNA(n) + a ribonucleoside 5'-triphosphate = RNA(n+1) + diphosphate. Functionally, DNA-dependent RNA polymerase catalyzes the transcription of DNA into RNA using the four ribonucleoside triphosphates as substrates. The sequence is that of DNA-directed RNA polymerase subunit alpha from Cellvibrio japonicus (strain Ueda107) (Pseudomonas fluorescens subsp. cellulosa).